Consider the following 386-residue polypeptide: S-(hydroxymethyl)glutathione dehydrogenase (386 aa).

Serine 2 is subject to N-acetylserine. Cysteine 49 lines the Zn(2+) pocket. Residue histidine 50 participates in NAD(+) binding. 7 residues coordinate Zn(2+): histidine 71, glutamate 72, cysteine 101, cysteine 104, cysteine 107, cysteine 115, and cysteine 179. Residues 204–209 (GCGTVG), aspartate 228, 300–302 (IGV), and 325–327 (SAF) each bind NAD(+).

The protein belongs to the zinc-containing alcohol dehydrogenase family. Class-III subfamily. Zn(2+) serves as cofactor.

Its subcellular location is the cytoplasm. It localises to the mitochondrion. The catalysed reaction is a primary alcohol + NAD(+) = an aldehyde + NADH + H(+). It catalyses the reaction a secondary alcohol + NAD(+) = a ketone + NADH + H(+). It carries out the reaction S-(hydroxymethyl)glutathione + NADP(+) = S-formylglutathione + NADPH + H(+). The enzyme catalyses S-(hydroxymethyl)glutathione + NAD(+) = S-formylglutathione + NADH + H(+). The catalysed reaction is S-nitrosoglutathione + NADH + H(+) = S-(hydroxysulfenamide)glutathione + NAD(+). In terms of biological role, oxidizes long-chain alcohols and, in the presence of glutathione, is able to oxidize formaldehyde. Is responsible for yeast resistance to formaldehyde. Also acts as a S-nitroso-glutathione reductase by catalyzing the NADH-dependent reduction of S-nitrosoglutathione, thereby regulating protein S-nitrosylation. The chain is S-(hydroxymethyl)glutathione dehydrogenase (SFA1) from Saccharomyces cerevisiae (strain ATCC 204508 / S288c) (Baker's yeast).